An 89-amino-acid chain; its full sequence is Small ribosomal subunit protein uS15 (89 aa).

This sequence belongs to the universal ribosomal protein uS15 family. Part of the 30S ribosomal subunit. Forms a bridge to the 50S subunit in the 70S ribosome, contacting the 23S rRNA.

One of the primary rRNA binding proteins, it binds directly to 16S rRNA where it helps nucleate assembly of the platform of the 30S subunit by binding and bridging several RNA helices of the 16S rRNA. In terms of biological role, forms an intersubunit bridge (bridge B4) with the 23S rRNA of the 50S subunit in the ribosome. The sequence is that of Small ribosomal subunit protein uS15 from Blochmanniella pennsylvanica (strain BPEN).